The following is a 767-amino-acid chain: Cilia- and flagella-associated protein 91 (767 aa).

Residues 1 to 29 form a disordered region; that stretch reads MSHAVTIEEPQAQPQVSQTRYRERSRAGS.

Belongs to the CFAP91 family. As to quaternary structure, interacts with MYCBP and AKAP1. Part of a complex containing MYCBP, AKAP1 and PRKAR2B. Interacts with CFAP61. In terms of assembly, does not interact with MYCBP. In terms of processing, phosphorylated by PKA. As to expression, strongly expressed in the liver. In terms of tissue distribution, widely expressed, but strongly expressed in all spermatogenesis-related tissues, including the testis, the epithelium of cauda and the corpus epididymis, as well as the spermatid and mature sperm. Also expressed in Leydig cells.

The protein localises to the mitochondrion. It localises to the cytoplasm. Its subcellular location is the cytoskeleton. It is found in the cilium axoneme. In terms of biological role, involved in sperm flagellum axonemal organization and function. May regulate cilium motility through its role in the assembly of the axonemal radial spokes. This is Cilia- and flagella-associated protein 91 from Homo sapiens (Human).